Consider the following 609-residue polypeptide: mRNA cap guanine-N(7) methyltransferase (609 aa).

Basic and acidic residues predominate over residues 1–10 (MASKEEERTG). The disordered stretch occupies residues 1 to 252 (MASKEEERTG…EEDAMRNSQS (252 aa)). Low complexity-rich tracts occupy residues 28–47 (QPVVPAEPASASASIEATPT) and 70–87 (PQTTTIEPSQQPEQQQKQ). Positions 148 to 163 (ANDRPISKRKRLEERH) are enriched in basic and acidic residues. Residues 193-205 (PRSPSPPLPPRSP) are compositionally biased toward pro residues. Residues 233 to 247 (RRQEERERALEEDAM) show a composition bias toward basic and acidic residues. The 313-residue stretch at 278–590 (SKIKGLRSFN…KYTPLGFTSA (313 aa)) folds into the mRNA cap 0 methyltransferase domain. 287–288 (NN) lines the mRNA pocket. Residues Lys291, Gly314, Asp338, Asp379, 422 to 424 (MFA), and Tyr427 contribute to the S-adenosyl-L-methionine site.

This sequence belongs to the class I-like SAM-binding methyltransferase superfamily. mRNA cap 0 methyltransferase family.

It is found in the nucleus. The enzyme catalyses a 5'-end (5'-triphosphoguanosine)-ribonucleoside in mRNA + S-adenosyl-L-methionine = a 5'-end (N(7)-methyl 5'-triphosphoguanosine)-ribonucleoside in mRNA + S-adenosyl-L-homocysteine. Its function is as follows. Responsible for methylating the 5'-cap structure of mRNAs. The chain is mRNA cap guanine-N(7) methyltransferase (abd1) from Aspergillus niger (strain ATCC MYA-4892 / CBS 513.88 / FGSC A1513).